A 237-amino-acid chain; its full sequence is Synapse differentiation-inducing gene protein 1-like (237 aa).

Disordered stretches follow at residues 1–23 (MESL…HRPY), 84–111 (AGSC…PGQA), and 127–148 (ELQG…ESEC). Residues 1 to 161 (MESLSELQNP…FLTLPPRDHL (161 aa)) lie on the Extracellular side of the membrane. Residues 129–148 (QGQEDSQEEESDGTSSESEC) are compositionally biased toward acidic residues. Residues 162 to 182 (GLTLFSMLCCFWPLGIAAFYF) form a helical membrane-spanning segment. Over 183–204 (SQGTSKAISKGDFRLASTTSRR) the chain is Cytoplasmic. The chain crosses the membrane as a helical span at residues 205–225 (ALFLATLSIAVGAGLYVAVVV). At 226-237 (ALAAYMSQNGHG) the chain is on the extracellular side.

It belongs to the CD225/Dispanin family. As to expression, expression is restricted to the caudate-putamen. Down-regulated in R6/2 transgenic mice, a model for Huntington disease.

Its subcellular location is the membrane. The protein resides in the golgi apparatus. It localises to the cis-Golgi network. This is Synapse differentiation-inducing gene protein 1-like (Syndig1l) from Mus musculus (Mouse).